The sequence spans 206 residues: Enterobactin synthase component D (206 aa).

Mg(2+) is bound by residues aspartate 107, glutamate 109, and glutamate 152.

Belongs to the P-Pant transferase superfamily. EntD family. As to quaternary structure, entB, EntD, EntE, and EntF form a multienzyme complex called enterobactin synthase. Mg(2+) is required as a cofactor.

It is found in the membrane. The catalysed reaction is apo-[aryl-carrier protein] + CoA = holo-[aryl-carrier protein] + adenosine 3',5'-bisphosphate + H(+). It carries out the reaction apo-[peptidyl-carrier protein] + CoA = holo-[peptidyl-carrier protein] + adenosine 3',5'-bisphosphate + H(+). It participates in siderophore biosynthesis; enterobactin biosynthesis. Functionally, involved in the biosynthesis of the siderophore enterobactin (enterochelin), which is a macrocyclic trimeric lactone of N-(2,3-dihydroxybenzoyl)-serine. The serine trilactone serves as a scaffolding for the three catechol functionalities that provide hexadentate coordination for the tightly ligated iron(2+) atoms. Plays an essential role in the assembly of the enterobactin by catalyzing the transfer of the 4'-phosphopantetheine (Ppant) moiety from coenzyme A to the apo-domains of both EntB (ArCP domain) and EntF (PCP domain) to yield their holo-forms which make them competent for the activation of 2,3-dihydroxybenzoate (DHB) and L-serine, respectively. This chain is Enterobactin synthase component D, found in Escherichia coli O157:H7.